A 328-amino-acid polypeptide reads, in one-letter code: MNRKKIIVAAVIVALLATLAYGWHYYRQQNDASLTLYGNVDIRTVNLGFRVAGRLASLAVDEGDDIHPGQTLGKLDDGPYLNALKQAQANVQSAQAQLALLKAGYREEEIAQVRSEVAQRQAAFDYADNFLKRQQGLWASKAVSANELENARTARNQAQANLQAAKDKLAQFLSGNRPQEIAQAEANLAQTEAELAQAQLNLQDTILLAPSAGTVLTRAVEPGTILSASNTVFTVSLTDPVWVRAYVSERHLGQAIPGSEVEVFTDGRPDKPYHGKIGFVSPTAEFTPKTVETPDLRTDLVYRLRIIITDADESLRQGMPVTVRFPQR.

Residues 1–22 form the signal peptide; sequence MNRKKIIVAAVIVALLATLAYG. 2 coiled-coil regions span residues 80–109 and 141–209; these read YLNA…REEE and KAVS…ILLA.

The protein belongs to the UPF0194 family.

Its subcellular location is the periplasm. In Yersinia pestis bv. Antiqua (strain Antiqua), this protein is UPF0194 membrane protein YPA_1093.